A 105-amino-acid polypeptide reads, in one-letter code: Cell division protein FtsB (105 aa).

Residues 1 to 3 (MRI) are Cytoplasmic-facing. Residues 4–21 (VIYSMLVLLIAIQYPLWL) traverse the membrane as a helical segment. Over 22-105 (GKGGWLKVYE…DTAKASTVKQ (84 aa)) the chain is Periplasmic. The stretch at 32–60 (MEKQVELQEAKNSLLALRNAKLEGDVKDL) forms a coiled coil.

Belongs to the FtsB family. As to quaternary structure, part of a complex composed of FtsB, FtsL and FtsQ.

Its subcellular location is the cell inner membrane. Functionally, essential cell division protein. May link together the upstream cell division proteins, which are predominantly cytoplasmic, with the downstream cell division proteins, which are predominantly periplasmic. The polypeptide is Cell division protein FtsB (Polynucleobacter asymbioticus (strain DSM 18221 / CIP 109841 / QLW-P1DMWA-1) (Polynucleobacter necessarius subsp. asymbioticus)).